We begin with the raw amino-acid sequence, 784 residues long: Toll-like receptor 2 (784 aa).

The N-terminal stretch at 1 to 20 is a signal peptide; the sequence is MPHTLWMVWVLGVIISLSKE. The Extracellular portion of the chain corresponds to 21–587; the sequence is ESSNQASLSC…VRLSVSECHR (567 aa). A disulfide bond links Cys30 and Cys36. 19 LRR repeats span residues 54–77, 78–101, 102–125, 126–150, 151–175, 176–199, 200–223, 224–250, 251–278, 279–308, 309–337, 338–361, 362–388, 389–414, 415–437, 438–457, 458–478, 479–500, and 501–524; these read VKSLDLSNNRITYISNSDLQRCVN, LQALVLTSNGINTIEEDSFSSLGS, LEHLDLSYNYLSNLSSSWFKPLSS, LTFLNLLGNPYKTLGETSLFSHLTK, LQILRVGNMDTFTKIQRKDFAGLTF, LEELEIDASDLQSYEPKSLKSIQN, VSHLILHMKQHILLLEIFVDVTSS, VECLELRDTDLDTFRFSELSTGETNSL, IKKFTFRNVKITDESLFQVMKLLNQISG, LLELEFDDCTLNGVGNFRASDNDRVIDPGK, VETLTIRRLHIPRFYLFYDLSTLYSLTER, VKRITVENSKVFLVPCLLSQHLKS, LEYLDLSENLIVEEYLKNSACEDAWPS, LQTLILRQNHLASLEKTGETLLTLKN, LTNVDISKNSFHSMPETCQWPEK, MKYLNLSSTRIHSVTGCIPK, TLEILDVSNNNLNLFSLNLPQ, LKELYISRNKLMTLPDASLLPM, and LLVLKISRNAITTFSKEQLDSFHT. Asn114 is a glycosylation site (N-linked (GlcNAc...) asparagine). Asn199 is a glycosylation site (N-linked (GlcNAc...) asparagine). A disulfide bond links Cys353 and Cys382. Asn414 is a glycosylation site (N-linked (GlcNAc...) asparagine). Cys432 and Cys454 are disulfide-bonded. Residue Asn442 is glycosylated (N-linked (GlcNAc...) asparagine). Residues 525-579 enclose the LRRCT domain; that stretch reads LKTLEAGGNNFICSCEFLSFTQEQQALAKVLIDWPANYLCDSPSHVRGQQVQDVR. A helical membrane pass occupies residues 588–608; that stretch reads TALVSGMCCALFLLILLTGVL. Over 609-784 the chain is Cytoplasmic; that stretch reads CHRFHGLWYM…WVNLRAAIKS (176 aa). The TIR domain maps to 639–782; it reads ICYDAFVSYS…GFWVNLRAAI (144 aa). Lys754 is covalently cross-linked (Glycyl lysine isopeptide (Lys-Gly) (interchain with G-Cter in ubiquitin)). The ATG16L1-binding motif motif lies at 761 to 778; sequence YLEWPMDEAQREGFWVNL.

The protein belongs to the Toll-like receptor family. As to quaternary structure, interacts with LY96, TLR1 and TLR6 (via extracellular domain). TLR2 seems to exist in heterodimers with either TLR1 or TLR6 before stimulation by the ligand. The heterodimers form bigger oligomers in response to their corresponding ligands as well as further heterotypic associations with other receptors such as CD14 and/or CD36. Binds MYD88 (via TIR domain). Interacts with TICAM1. Interacts with CNPY3. Interacts with ATG16L1. Interacts with PPP1R11. Interacts with TICAM2. Interacts with TIRAP. In terms of processing, ubiquitinated at Lys-754 by PPP1R11, leading to its degradation. Deubiquitinated by USP2. Post-translationally, glycosylation of Asn-442 is critical for secretion of the N-terminal ectodomain of TLR2.

It is found in the membrane. It localises to the cytoplasmic vesicle. The protein localises to the phagosome membrane. The protein resides in the membrane raft. Its function is as follows. Cooperates with LY96 to mediate the innate immune response to bacterial lipoproteins and other microbial cell wall components. Cooperates with TLR1 or TLR6 to mediate the innate immune response to bacterial lipoproteins or lipopeptides. Acts via MYD88 and TRAF6, leading to NF-kappa-B activation, cytokine secretion and the inflammatory response. May also promote apoptosis in response to lipoproteins. Forms activation clusters composed of several receptors depending on the ligand, these clusters trigger signaling from the cell surface and subsequently are targeted to the Golgi in a lipid-raft dependent pathway. Forms the cluster TLR2:TLR6:CD14:CD36 in response to diacylated lipopeptides and TLR2:TLR1:CD14 in response to triacylated lipopeptides. The protein is Toll-like receptor 2 (TLR2) of Pan troglodytes (Chimpanzee).